The primary structure comprises 451 residues: Uronate isomerase (451 aa).

The protein belongs to the metallo-dependent hydrolases superfamily. Uronate isomerase family. In terms of assembly, homotrimer.

It carries out the reaction D-glucuronate = D-fructuronate. The catalysed reaction is aldehydo-D-galacturonate = keto-D-tagaturonate. The protein operates within carbohydrate metabolism; pentose and glucuronate interconversion. The sequence is that of Uronate isomerase from Thermotoga maritima (strain ATCC 43589 / DSM 3109 / JCM 10099 / NBRC 100826 / MSB8).